A 102-amino-acid polypeptide reads, in one-letter code: Large ribosomal subunit protein bL36m (102 aa).

It belongs to the bacterial ribosomal protein bL36 family. As to quaternary structure, component of the mitochondrial ribosome large subunit (39S) which comprises a 16S rRNA and about 50 distinct proteins.

It is found in the mitochondrion. This chain is Large ribosomal subunit protein bL36m (Mrpl36), found in Mus musculus (Mouse).